Here is a 63-residue protein sequence, read N- to C-terminus: Small, acid-soluble spore protein H 2 (63 aa).

It belongs to the SspH family.

The protein localises to the spore core. In Clostridium botulinum (strain ATCC 19397 / Type A), this protein is Small, acid-soluble spore protein H 2.